Consider the following 359-residue polypeptide: 4-hydroxy-3-methylbut-2-en-1-yl diphosphate synthase (flavodoxin) (359 aa).

Cys264, Cys267, Cys299, and Glu306 together coordinate [4Fe-4S] cluster.

It belongs to the IspG family. [4Fe-4S] cluster is required as a cofactor.

The catalysed reaction is (2E)-4-hydroxy-3-methylbut-2-enyl diphosphate + oxidized [flavodoxin] + H2O + 2 H(+) = 2-C-methyl-D-erythritol 2,4-cyclic diphosphate + reduced [flavodoxin]. The protein operates within isoprenoid biosynthesis; isopentenyl diphosphate biosynthesis via DXP pathway; isopentenyl diphosphate from 1-deoxy-D-xylulose 5-phosphate: step 5/6. In terms of biological role, converts 2C-methyl-D-erythritol 2,4-cyclodiphosphate (ME-2,4cPP) into 1-hydroxy-2-methyl-2-(E)-butenyl 4-diphosphate. The sequence is that of 4-hydroxy-3-methylbut-2-en-1-yl diphosphate synthase (flavodoxin) from Helicobacter pylori (strain P12).